The chain runs to 463 residues: Bifunctional protein HldE (463 aa).

Positions 1 to 315 are ribokinase; sequence MKKILVIGDL…LILNQTHPKI (315 aa). Residue 191–194 coordinates ATP; it reads NRAE. Residue Asp-260 is part of the active site. A cytidylyltransferase region spans residues 334–463; that stretch reads FTNGCFDLLH…IEKIKRTHND (130 aa).

In the N-terminal section; belongs to the carbohydrate kinase PfkB family. The protein in the C-terminal section; belongs to the cytidylyltransferase family. Homodimer.

It catalyses the reaction D-glycero-beta-D-manno-heptose 7-phosphate + ATP = D-glycero-beta-D-manno-heptose 1,7-bisphosphate + ADP + H(+). The enzyme catalyses D-glycero-beta-D-manno-heptose 1-phosphate + ATP + H(+) = ADP-D-glycero-beta-D-manno-heptose + diphosphate. It participates in nucleotide-sugar biosynthesis; ADP-L-glycero-beta-D-manno-heptose biosynthesis; ADP-L-glycero-beta-D-manno-heptose from D-glycero-beta-D-manno-heptose 7-phosphate: step 1/4. It functions in the pathway nucleotide-sugar biosynthesis; ADP-L-glycero-beta-D-manno-heptose biosynthesis; ADP-L-glycero-beta-D-manno-heptose from D-glycero-beta-D-manno-heptose 7-phosphate: step 3/4. In terms of biological role, catalyzes the phosphorylation of D-glycero-D-manno-heptose 7-phosphate at the C-1 position to selectively form D-glycero-beta-D-manno-heptose-1,7-bisphosphate. Catalyzes the ADP transfer from ATP to D-glycero-beta-D-manno-heptose 1-phosphate, yielding ADP-D-glycero-beta-D-manno-heptose. The sequence is that of Bifunctional protein HldE from Helicobacter pylori (strain HPAG1).